The chain runs to 208 residues: Fibroblast growth factor 6 (208 aa).

The N-terminal stretch at 1-37 (MALGQKLFITMSRGAGRLQGTLWALVFLGILVGMVVP) is a signal peptide. Residue N45 is glycosylated (N-linked (GlcNAc...) asparagine). Cysteines 90 and 157 form a disulfide.

The protein belongs to the heparin-binding growth factors family. In terms of assembly, interacts with FGFR1, FGFR2 and FGFR4. Affinity between fibroblast growth factors (FGFs) and their receptors is increased by heparan sulfate glycosaminoglycans that function as coreceptors. In terms of tissue distribution, leukemia cell lines with platelet/ megakaryocytic differentiation potential.

The protein resides in the secreted. It is found in the extracellular space. Plays an important role in the regulation of cell proliferation, cell differentiation, angiogenesis and myogenesis, and is required for normal muscle regeneration. This chain is Fibroblast growth factor 6 (FGF6), found in Homo sapiens (Human).